The chain runs to 413 residues: Alpha-1-antitrypsin 1-5 (413 aa).

The N-terminal stretch at 1-24 (MTPSISWCLLLLAGLCCLVPSFLA) is a signal peptide. Asn64, Asn101, and Asn265 each carry an N-linked (GlcNAc...) asparagine glycan. Residues 368–387 (AATVLQGGFLSMPPILHFNR) form an RCL region.

This sequence belongs to the serpin family.

Its subcellular location is the secreted. Its function is as follows. Does not inhibit elastase or chymotrypsin. No target protease has been identified to date. The protein is Alpha-1-antitrypsin 1-5 (Serpina1e) of Mus musculus (Mouse).